A 335-amino-acid chain; its full sequence is UPF0353 protein BCG_1543 (335 aa).

2 helical membrane passes run 18-38 (WFFL…LMQL) and 67-87 (VPAI…AGPT). In terms of domain architecture, VWFA spans 98 to 294 (VVMLVIDVSQ…AELRAVYSSL (197 aa)). A helical membrane pass occupies residues 309–329 (VGWLRLGALALALAALAALLI).

Belongs to the UPF0353 family.

It localises to the cell membrane. The protein is UPF0353 protein BCG_1543 of Mycobacterium bovis (strain BCG / Pasteur 1173P2).